Reading from the N-terminus, the 367-residue chain is Protein RecA (367 aa).

An ATP-binding site is contributed by 73–80; sequence GPESSGKT.

The protein belongs to the RecA family.

It localises to the cytoplasm. In terms of biological role, can catalyze the hydrolysis of ATP in the presence of single-stranded DNA, the ATP-dependent uptake of single-stranded DNA by duplex DNA, and the ATP-dependent hybridization of homologous single-stranded DNAs. It interacts with LexA causing its activation and leading to its autocatalytic cleavage. In Delftia acidovorans (strain DSM 14801 / SPH-1), this protein is Protein RecA.